A 190-amino-acid polypeptide reads, in one-letter code: MGIIVPVLTLVFLLFAKVSHGASNPRVILVGGSVGSWKVPDSPNNTLNHWAENNRFKVGDFIVWKYDMKVDSVLQVTKEDYESCNTANPLKQYNDGNTKVALDKSGPYFFISGAPGNCAKGEKITLVVLAERKSGGGSSSGDAPKVSPVSPTAQTPAPAPGPAAAHNAAVGLKVASGWFLTAVVVGLAMA.

A signal peptide spans Met-1–Gly-21. The Phytocyanin domain maps to Arg-26 to Ala-130. Asn-44 is a glycosylation site (N-linked (GlcNAc...) asparagine). A disulfide bond links Cys-84 and Cys-118. The disordered stretch occupies residues Gly-135–Ala-164. The segment covering Pro-151 to Ala-164 has biased composition (low complexity). The GPI-anchor amidated asparagine moiety is linked to residue Asn-167. The propeptide at Ala-168 to Ala-190 is removed in mature form.

Belongs to the early nodulin-like (ENODL) family. Confined to flowers and siliques. Expressed in female gametophytes.

The protein localises to the cell membrane. Its function is as follows. May act as a carbohydrate transporter. Required, together with ENODL11, ENODL12, ENODL13, ENODL14 and ENODL15, for male-female communication and pollen tube reception and burst at the synergid cell surface of the female gametophyte. This Arabidopsis thaliana (Mouse-ear cress) protein is Early nodulin-like protein 12.